Consider the following 293-residue polypeptide: Bifunctional protein FolD (293 aa).

NADP(+) is bound by residues 164 to 166, serine 193, and threonine 234; that span reads GRS.

It belongs to the tetrahydrofolate dehydrogenase/cyclohydrolase family. Homodimer.

The enzyme catalyses (6R)-5,10-methylene-5,6,7,8-tetrahydrofolate + NADP(+) = (6R)-5,10-methenyltetrahydrofolate + NADPH. It catalyses the reaction (6R)-5,10-methenyltetrahydrofolate + H2O = (6R)-10-formyltetrahydrofolate + H(+). The protein operates within one-carbon metabolism; tetrahydrofolate interconversion. In terms of biological role, catalyzes the oxidation of 5,10-methylenetetrahydrofolate to 5,10-methenyltetrahydrofolate and then the hydrolysis of 5,10-methenyltetrahydrofolate to 10-formyltetrahydrofolate. This chain is Bifunctional protein FolD, found in Bacteroides fragilis (strain ATCC 25285 / DSM 2151 / CCUG 4856 / JCM 11019 / LMG 10263 / NCTC 9343 / Onslow / VPI 2553 / EN-2).